We begin with the raw amino-acid sequence, 297 residues long: uncharacterized protein (297 aa).

The active site involves E46.

This sequence belongs to the PhzF family. Homodimer and homotetramer.

This is an uncharacterized protein from Escherichia coli (strain K12).